Reading from the N-terminus, the 72-residue chain is Omega-conotoxin-like SVIA mutant 1 (72 aa).

An N-terminal signal peptide occupies residues 1 to 22; the sequence is MKLTCVVIVAVLLLTACQLITA. A propeptide spanning residues 23–48 is cleaved from the precursor; sequence EDSRGAQKHRTLRSTARRSKSELTTR. Disulfide bonds link C49–C63, C56–C66, and C62–C71. P55 carries the post-translational modification 4-hydroxyproline.

The protein belongs to the conotoxin O1 superfamily. As to expression, expressed by the venom duct.

It is found in the secreted. Omega-conotoxins act at presynaptic membranes, they bind and block voltage-gated calcium channels (Cav). The chain is Omega-conotoxin-like SVIA mutant 1 from Conus striatus (Striated cone).